The sequence spans 565 residues: Polycomb protein EED (565 aa).

WD repeat units lie at residues 89-133, 136-176, 185-224, and 240-278; these read DDGN…LYRT, GHGG…EKQP, GHSYDLLSVAFHDNGRYVLSAGHDQVINLWALPEFPNEHM, and IHNNLVDCVAFYGDLILSRACHEDTIVLWRIEGFSSDDP. Residues 417–488 are disordered; it reads VKKAPGAAGS…SASPDPDSPF (72 aa). Residues 429-450 are compositionally biased toward low complexity; that stretch reads GTAANGGHNNNNNNNNNNNNNN. Polar residues predominate over residues 451 to 468; it reads HETGSQRSFSATNNLSNS. The WD 5 repeat unit spans residues 519–559; it reads IDGAFVGRQVGWSPEGEWCVVVGNGNRALIYQRWGKERGLG.

Belongs to the WD repeat ESC family. In terms of assembly, component of the polycomb repressive complex 2 (PRC2) that consists of four core subunits icluding EZH2, EED, SUZ12, and RBBP4, among which EZH2 is the catalytic subunit and which minimally requires EED and SUZ12 for catalysis.

The protein resides in the nucleus. Component of the of the Polycomb Repressive Complex 2 (PRC2), a histone H3 lysine methyltransferase responsible for generating mono-, di-, and tri-methylation on Lys27 (H3K27me1, H3K27me2 and H3K27me3). The tri-methylated form is known to be critical in gene repression, and its proper placement is essential in defining repression patterns during development. EED is not a catalytic subunit but is required for the complex regulation of histone H3 lysine methylation by EZH2. The protein is Polycomb protein EED of Chaetomium thermophilum (strain DSM 1495 / CBS 144.50 / IMI 039719) (Thermochaetoides thermophila).